Here is a 1174-residue protein sequence, read N- to C-terminus: Ribonucleoside-diphosphate reductase large subunit-like protein (1174 aa).

The RIP homotypic interaction motif (RHIM) motif lies at 50–72 (PYVRIMNGVSGIQIGNHNAMSIA). 2 disordered regions span residues 170–269 (ASNA…KLKP) and 291–325 (AAAAVAPESESSPAASAPPAAAAMATGGDDEDQSS). Low complexity-rich tracts occupy residues 182–202 (ATSGAGSAAATPAATTPAATA), 233–243 (HVSVGTQATPS), and 291–316 (AAAAVAPESESSPAASAPPAAAAMAT).

This sequence belongs to the ribonucleoside diphosphate reductase large chain family. In terms of assembly, self-assembles into homo-oligomeric amyloid fibrils. Interacts with host RIPK1 (via RIP homotypic interaction motif); this interaction inhibits RIPK1 ubiquitination thereby preventing effective activation of host NF-kappa-B. Interacts with host RIPK3 (via RIP homotypic interaction motif); this interaction disrupts RIPK3-RIPK1 interactions characteristic of TNF-alpha induced necroptosis, thereby suppressing this death pathway. Interacts (via RIP homotypic interaction motif) with host ZBP1 (via RIP homotypic interaction motif); this interaction inhibits recruitment of RIPK1 and RIPK3 to ZBP1 and prevents ZBP1-induced NF-kappa-B activation. Post-translationally, undergoes proteolytic cleavage, generating two peptides, a N-terminal and a 116 kDa. The N-terminal peptide retains RIPK1- and RIPK3-binding activity as well as cell death suppression activity.

The protein resides in the virion. The protein localises to the host cytoplasm. In terms of biological role, provides optimal viral replication conditions by promoting host cell survival and avoiding the host inflammatory response linked to NF-kappa-B activation. Blocks RIPK1 ubiquitination, thereby preventing NF-kappa-B activation and virally induced inflammatory response. Prevents host necroptosis by targeting RIPK3 thereby preventing the formation of necroptotic RIPK1-RIPK3 complexes. Also inhibits ZBP1-induced necroptosis. Does not have ribonucleotide reductase activity. Betaherpesviruses probably use another strategy to expand the dNTP pool in a quiescent host cell. The polypeptide is Ribonucleoside-diphosphate reductase large subunit-like protein (Murid herpesvirus 1 (strain Smith) (MuHV-1)).